We begin with the raw amino-acid sequence, 749 residues long: RNA-binding protein 5-B (749 aa).

Residues 1–88 (MGSDKRVSRS…YHSDGDYMDH (88 aa)) form a disordered region. Residues 102-182 (KTIMLRGLPI…KTIAMHYSNP (81 aa)) form the RRM 1 domain. Residues 185 to 214 (KFEDWLCNKCGLYNFRRRLKCFRCGAAKAE) form a RanBP2-type zinc finger. The RRM 2 domain occupies 241–325 (SAIILRNIGP…KTIGVDFAKS (85 aa)). Disordered stretches follow at residues 425-471 (QMYQ…SVPD), 520-558 (PAAD…AQQI), 570-595 (NKQK…ESAA), and 626-680 (TEEE…NSNI). The segment covering 429-460 (QPGSPTQSGTSTAASTTPASTTSTEEATTPTA) has biased composition (low complexity). 2 stretches are compositionally biased toward basic and acidic residues: residues 585-594 (SRDEERKESA) and 627-648 (EEEK…EKYG). One can recognise a G-patch domain in the interval 677 to 723 (NSNIGNKMLQAMGWKEGSGLGRKSQGITAPIQAQVRMRGAGLGAKGS).

It belongs to the RBM5/RBM10 family. In terms of assembly, component of the spliceosome A complex (also known as the prespliceosome). Appears to dissociate from the spliceosome upon formation of the spliceosome B complex (also known as the precatalytic spliceosome), in which the heterotrimeric U4/U6.U5 snRNPs are bound.

The protein resides in the nucleus. Its function is as follows. Component of the spliceosome A complex. Regulates alternative splicing of a number of mRNAs. May modulate splice site pairing after recruitment of the U1 and U2 snRNPs to the 5' and 3' splice sites of the intron. This chain is RNA-binding protein 5-B (rbm5-b), found in Xenopus laevis (African clawed frog).